A 255-amino-acid chain; its full sequence is Proteasome subunit alpha (255 aa).

The segment at Arg-224–Gly-255 is disordered.

Belongs to the peptidase T1A family. As to quaternary structure, the 20S proteasome core is composed of 14 alpha and 14 beta subunits that assemble into four stacked heptameric rings, resulting in a barrel-shaped structure. The two inner rings, each composed of seven catalytic beta subunits, are sandwiched by two outer rings, each composed of seven alpha subunits. The catalytic chamber with the active sites is on the inside of the barrel. Has a gated structure, the ends of the cylinder being occluded by the N-termini of the alpha-subunits. Is capped by the proteasome-associated ATPase, ARC.

It localises to the cytoplasm. It functions in the pathway protein degradation; proteasomal Pup-dependent pathway. With respect to regulation, the formation of the proteasomal ATPase ARC-20S proteasome complex, likely via the docking of the C-termini of ARC into the intersubunit pockets in the alpha-rings, may trigger opening of the gate for substrate entry. Interconversion between the open-gate and close-gate conformations leads to a dynamic regulation of the 20S proteasome proteolysis activity. Functionally, component of the proteasome core, a large protease complex with broad specificity involved in protein degradation. The protein is Proteasome subunit alpha of Nocardioides sp. (strain ATCC BAA-499 / JS614).